The chain runs to 136 residues: Large ribosomal subunit protein uL16 (136 aa).

It belongs to the universal ribosomal protein uL16 family. As to quaternary structure, part of the 50S ribosomal subunit.

Its function is as follows. Binds 23S rRNA and is also seen to make contacts with the A and possibly P site tRNAs. The sequence is that of Large ribosomal subunit protein uL16 from Rickettsia africae (strain ESF-5).